We begin with the raw amino-acid sequence, 533 residues long: 2-isopropylmalate synthase (533 aa).

In terms of domain architecture, Pyruvate carboxyltransferase spans 8-269 (ILIFDTTLRD…YFNPFLGRPA (262 aa)). The Mn(2+) site is built by Asp-17, His-208, His-210, and Asn-244. The regulatory domain stretch occupies residues 408–533 (RLERVQVSCG…REHPPVVASL (126 aa)).

The protein belongs to the alpha-IPM synthase/homocitrate synthase family. LeuA type 1 subfamily. In terms of assembly, homodimer. Requires Mn(2+) as cofactor.

The protein localises to the cytoplasm. It catalyses the reaction 3-methyl-2-oxobutanoate + acetyl-CoA + H2O = (2S)-2-isopropylmalate + CoA + H(+). It functions in the pathway amino-acid biosynthesis; L-leucine biosynthesis; L-leucine from 3-methyl-2-oxobutanoate: step 1/4. In terms of biological role, catalyzes the condensation of the acetyl group of acetyl-CoA with 3-methyl-2-oxobutanoate (2-ketoisovalerate) to form 3-carboxy-3-hydroxy-4-methylpentanoate (2-isopropylmalate). The chain is 2-isopropylmalate synthase from Synechocystis sp. (strain ATCC 27184 / PCC 6803 / Kazusa).